Here is an 88-residue protein sequence, read N- to C-terminus: Small ribosomal subunit protein uS17 (88 aa).

Belongs to the universal ribosomal protein uS17 family. Part of the 30S ribosomal subunit.

Its function is as follows. One of the primary rRNA binding proteins, it binds specifically to the 5'-end of 16S ribosomal RNA. The chain is Small ribosomal subunit protein uS17 from Lawsonia intracellularis (strain PHE/MN1-00).